The following is a 92-amino-acid chain: MPRSLKKGPFVDHHLLKKVFEAQESNSKKPIKTWSRRSLIVPDMIGLTIAVHNGQQHVPVLMTEEMVGHKLGEFAVTRNYRGHAADKKAKKK.

This sequence belongs to the universal ribosomal protein uS19 family.

Its function is as follows. Protein S19 forms a complex with S13 that binds strongly to the 16S ribosomal RNA. This chain is Small ribosomal subunit protein uS19, found in Francisella philomiragia subsp. philomiragia (strain ATCC 25017 / CCUG 19701 / FSC 153 / O#319-036).